A 40-amino-acid polypeptide reads, in one-letter code: Large ribosomal subunit protein bL36 (40 aa).

The protein belongs to the bacterial ribosomal protein bL36 family.

The protein is Large ribosomal subunit protein bL36 of Corynebacterium jeikeium (strain K411).